The primary structure comprises 112 residues: MWDPLLNEFPESVHGFRCMLAVKYLQLVECTYSPDTLGYDLIRDLFSVIRAKNYVEATSRYHNFYSRLEGSSPSELRQPIQQPCGCPYCPRHKKTILDKQTHQSEAQVVSDV.

The protein belongs to the geminiviridae protein AV2/V2 family. In terms of assembly, interacts with host SGS3.

It is found in the host cytoplasm. The protein localises to the host perinuclear region. Functionally, through its interaction with host SGS3, acts as a suppressor of RNA-mediated gene silencing, also known as post-transcriptional gene silencing (PTGS), a mechanism of plant viral defense that limits the accumulation of viral RNAs. The sequence is that of Protein AV2 from Indian cassava mosaic virus (ICMV).